The sequence spans 159 residues: MADS-box transcription factor 23 (159 aa).

Residues 1–61 enclose the MADS-box domain; sequence MGRGKIEIKR…SRLYDFASSS (61 aa). One can recognise a K-box domain in the interval 86–159; that stretch reads AKLWQQEAAS…QELSRKVVTT (74 aa).

As to expression, expressed in seedling roots and developing seeds.

The protein localises to the nucleus. In terms of biological role, probable transcription factor. The protein is MADS-box transcription factor 23 (MADS23) of Oryza sativa subsp. japonica (Rice).